The sequence spans 129 residues: MRLAMILLSIPLFVSGNVLHVPTQVTKSHAVSPDAQFVVAMGRRSLRTSGEANEERTRLNTLLLLDDVTEAEMSSIKKLALTFAKLENRNDGAADLFNMLRRQGHTKESARNAGNLYTKYLQNPSAFHT.

The first 16 residues, 1-16 (MRLAMILLSIPLFVSG), serve as a signal peptide directing secretion. The short motif at 44–56 (RSLRTSGEANEER) is the RxLR-dEER element.

This sequence belongs to the RxLR effector family.

It localises to the secreted. It is found in the host cytoplasm. Its subcellular location is the host nucleus. Its function is as follows. Effector that enhances P.infestans colonization of Nicotiana benthamiana leaves. The protein is RxLR effector protein PexRD43 of Phytophthora infestans (strain T30-4) (Potato late blight agent).